Consider the following 310-residue polypeptide: Dermonecrotic toxin LiSicTox-alphaII2 (310 aa).

Positions 1 to 18 are cleaved as a signal peptide; that stretch reads MLLRIALILGCWSILSEG. A propeptide spanning residues 19 to 26 is cleaved from the precursor; sequence AENDIAER. His38 is a catalytic residue. Residues Glu58 and Asp60 each contribute to the Mg(2+) site. His74 acts as the Nucleophile in catalysis. 2 disulfides stabilise this stretch: Cys78–Cys84 and Cys80–Cys224. A glycan (N-linked (GlcNAc...) asparagine) is linked at Asn99. Residue Asp118 participates in Mg(2+) binding.

The protein belongs to the arthropod phospholipase D family. Class II subfamily. Mg(2+) is required as a cofactor. Expressed by the venom gland.

Its subcellular location is the secreted. The enzyme catalyses an N-(acyl)-sphingosylphosphocholine = an N-(acyl)-sphingosyl-1,3-cyclic phosphate + choline. It catalyses the reaction an N-(acyl)-sphingosylphosphoethanolamine = an N-(acyl)-sphingosyl-1,3-cyclic phosphate + ethanolamine. It carries out the reaction a 1-acyl-sn-glycero-3-phosphocholine = a 1-acyl-sn-glycero-2,3-cyclic phosphate + choline. The catalysed reaction is a 1-acyl-sn-glycero-3-phosphoethanolamine = a 1-acyl-sn-glycero-2,3-cyclic phosphate + ethanolamine. Dermonecrotic toxins cleave the phosphodiester linkage between the phosphate and headgroup of certain phospholipids (sphingolipid and lysolipid substrates), forming an alcohol (often choline) and a cyclic phosphate. This toxin acts on sphingomyelin (SM). It may also act on ceramide phosphoethanolamine (CPE), lysophosphatidylcholine (LPC) and lysophosphatidylethanolamine (LPE), but not on lysophosphatidylserine (LPS), and lysophosphatidylglycerol (LPG). It acts by transphosphatidylation, releasing exclusively cyclic phosphate products as second products. Induces dermonecrosis, hemolysis, increased vascular permeability, edema, inflammatory response, and platelet aggregation. This chain is Dermonecrotic toxin LiSicTox-alphaII2, found in Loxosceles intermedia (Brown spider).